The following is a 428-amino-acid chain: Glucose-1-phosphate adenylyltransferase (428 aa).

Residues tyrosine 99, glycine 164, 179 to 180, and serine 190 each bind alpha-D-glucose 1-phosphate; that span reads EK.

The protein belongs to the bacterial/plant glucose-1-phosphate adenylyltransferase family. Homotetramer.

It catalyses the reaction alpha-D-glucose 1-phosphate + ATP + H(+) = ADP-alpha-D-glucose + diphosphate. The protein operates within glycan biosynthesis; glycogen biosynthesis. Functionally, involved in the biosynthesis of ADP-glucose, a building block required for the elongation reactions to produce glycogen. Catalyzes the reaction between ATP and alpha-D-glucose 1-phosphate (G1P) to produce pyrophosphate and ADP-Glc. In Thermomicrobium roseum (strain ATCC 27502 / DSM 5159 / P-2), this protein is Glucose-1-phosphate adenylyltransferase.